The chain runs to 223 residues: Glycolipid transfer protein 2 (223 aa).

4 residues coordinate a ganglioside GM3 (d18:1(4E)): Asp69, Asn73, Trp116, and His155.

Belongs to the GLTP family.

Functionally, transfers glycolipids in vitro. This is Glycolipid transfer protein 2 from Arabidopsis thaliana (Mouse-ear cress).